The chain runs to 296 residues: Cobalamin trafficking protein CblD (296 aa).

The transit peptide at 1–38 (MANVLCNRARLVSYLPGFCSLVKRVVNPKAFSTAGSSG) directs the protein to the mitochondrion. At lysine 203 the chain carries N6-acetyllysine.

As to quaternary structure, heterodimer with MMACHC. Forms a multiprotein complex with MMACHC, MTR and MTRR. In terms of tissue distribution, widely expressed at high levels.

It is found in the cytoplasm. It localises to the mitochondrion. Functionally, involved in cobalamin metabolism and trafficking. Plays a role in regulating the biosynthesis and the proportion of two coenzymes, methylcob(III)alamin (MeCbl) and 5'-deoxyadenosylcobalamin (AdoCbl). Promotes oxidation of cob(II)alamin bound to MMACHC. The processing of cobalamin in the cytosol occurs in a multiprotein complex composed of at least MMACHC, MMADHC, MTRR (methionine synthase reductase) and MTR (methionine synthase) which may contribute to shuttle safely and efficiently cobalamin towards MTR in order to produce methionine. The polypeptide is Cobalamin trafficking protein CblD (Homo sapiens (Human)).